Reading from the N-terminus, the 963-residue chain is VPS35 endosomal protein-sorting factor-like (963 aa).

A disordered region spans residues Ser43–Leu69. The segment covering Ser53 to Leu69 has biased composition (low complexity). The residue at position 265 (Ser265) is a Phosphoserine. A helical membrane pass occupies residues Ala703–Phe719.

Belongs to the VPS35L family. In terms of assembly, component of the heterotrimeric retriever complex formed by VPS26C, VPS29 and VPS35L. Interacts with VPS29. Interacts with COMMD1, CCDC93 and CCDC22; associates with the CCC (COMMD/CCDC22/CCDC93) complex which contains at least COMMD1 (and possibly other COMM domain-containing proteins), CCDC22 and CCDC93. Interacts with WASHC1, WASHC2A and WASHC2C. Interacts with SNX17 and SNX31.

The protein localises to the membrane. Its subcellular location is the endosome. Functionally, acts as a component of the retriever complex. The retriever complex is a heterotrimeric complex related to retromer cargo-selective complex (CSC) and essential for retromer-independent retrieval and recycling of numerous cargos such as integrin alpha-5/beta-1 (ITGA5:ITGB1). The recruitment of the retriever complex to the endosomal membrane involves CCC and WASH complexes. In the endosomes, drives the retrieval and recycling of NxxY-motif-containing cargo proteins by coupling to SNX17, a cargo essential for the homeostatic maintenance of numerous cell surface proteins associated with processes that include cell migration, cell adhesion, nutrient supply and cell signaling. Involved in copper-dependent ATP7A trafficking between the trans-Golgi network and vesicles in the cell periphery; the function is proposed to depend on its association with the CCC complex and cooperation with the WASH complex on early endosomes. Seems not to be required for CCC complex stability. Its function is as follows. (Microbial infection) The heterotrimeric retriever complex, in collaboration with the CCC complex, mediates the exit of human papillomavirus to the cell surface. In Homo sapiens (Human), this protein is VPS35 endosomal protein-sorting factor-like.